The chain runs to 798 residues: Disintegrin and metalloproteinase domain-containing protein B (798 aa).

An N-terminal signal peptide occupies residues 1-23 (MKAFSCLLAVIATAASLFQHVDA). The Extracellular segment spans residues 24–706 (SHARDKLNNI…VSDWVSRHKP (683 aa)). Asn32, Asn226, Asn227, Asn313, and Asn407 each carry an N-linked (GlcNAc...) asparagine glycan. Residues 271–510 (KVALIGVVAD…RTILTNCLTT (240 aa)) form the Peptidase M12B domain. 3 disulfides stabilise this stretch: Cys395–Cys495, Cys448–Cys459, and Cys580–Cys600. His431 lines the Zn(2+) pocket. Glu432 is an active-site residue. Positions 435 and 441 each coordinate Zn(2+). A Disintegrin domain is found at 519–608 (GQQCGNGIVE…DCPHDIHSKD (90 aa)). A helical transmembrane segment spans residues 707 to 727 (IVIGVAVGAGCLLLLAIASCI). The Cytoplasmic segment spans residues 728–798 (CGRSRRQRPR…PGHMPPTRYA (71 aa)). The tract at residues 734–798 (QRPRNRKMPP…PGHMPPTRYA (65 aa)) is disordered. Over residues 775 to 792 (NNIPPPINAPPPAYPGHM) the composition is skewed to pro residues.

Requires Zn(2+) as cofactor.

It localises to the membrane. Its function is as follows. Probable zinc protease. This is Disintegrin and metalloproteinase domain-containing protein B (ADM-B) from Trichophyton verrucosum (strain HKI 0517).